A 516-amino-acid polypeptide reads, in one-letter code: GPI mannosyltransferase 4 (516 aa).

Over 1 to 5 (MMRYQ) the chain is Lumenal. Residues 6–26 (WWLYLVYAIGLMLCLGPSYIH) traverse the membrane as a helical segment. Over 27–60 (PDEHFQCIEILAMQFMKVKGTIPWEFKSKFAARS) the chain is Cytoplasmic. Residues 61–81 (YGPLLLVYGPLFTILESFPEI) traverse the membrane as a helical segment. Residues 82–175 (QDNPALILYS…IQRSNFKNSV (94 aa)) lie on the Lumenal side of the membrane. Residues 176-196 (ILGLIFSFGVFNRVTFPAFIF) traverse the membrane as a helical segment. The Cytoplasmic portion of the chain corresponds to 197–210 (LPCLILFWKFYRVH). The helical transmembrane segment at 211–231 (WKSFSLLLLSFSFSSCLFVLI) threads the bilayer. At 232–270 (DTNIYNNGKGFVITPLNNLKYNLNVQNLQVHGLHPRYTH) the chain is on the lumenal side. The helical transmembrane segment at 271–291 (LLVNLPQIVGPVLLLAIFSGY) threads the bilayer. At 292-295 (KLDK) the chain is on the cytoplasmic side. The chain crosses the membrane as a helical span at residues 296-316 (LSTYAIISGLLFLSFFQHQEL). Residue Arg317 is a topological domain, lumenal. The chain crosses the membrane as a helical span at residues 318-338 (FLVPLVPLLVTNLNWTPLSST). Over 339 to 348 (LVNKKIFKGT) the chain is Cytoplasmic. Residues 349-369 (WLLFNIIMAFIMGISHQAGII) form a helical membrane-spanning segment. At 370–516 (QFLGDYFHFR…GLTVYSIELL (147 aa)) the chain is on the lumenal side. Residues Asn403 and Asn452 are each glycosylated (N-linked (GlcNAc...) asparagine).

The protein belongs to the glycosyltransferase 22 family. PIGZ subfamily.

The protein resides in the endoplasmic reticulum membrane. It participates in glycolipid biosynthesis; glycosylphosphatidylinositol-anchor biosynthesis. Its function is as follows. Alpha-1,2-mannosyltransferase involved in glycosylphosphatidylinositol-anchor biosynthesis. Transfers a fourth mannose to trimannosyl-GPIs during GPI precursor assembly. The presence of a fourth mannose in GPI is essential in fungi. Involved in plasmid maintenance with SMP2. This chain is GPI mannosyltransferase 4 (SMP3), found in Saccharomyces cerevisiae (strain ATCC 204508 / S288c) (Baker's yeast).